The chain runs to 2046 residues: Protein TIC 214 (2046 aa).

A run of 6 helical transmembrane segments spans residues 18–38 (VSGPIILFGLYYGFIATLPFG), 54–74 (LYGIIAISGSITGQLIVFLSM), 79–99 (IYAALWKPHAITLLVIPYTFC), 125–145 (ILSLFMGGLILQLLNPILLAN), 163–183 (ISFMISSFCGWLGGHILFINL), and 214–234 (TFSVLLISYFSFYLGRSPLIF). 3 disordered regions span residues 278 to 299 (DEDRSVAMAKKGRSVAEDEDRS), 320 to 472 (ARSV…VPRE), and 1833 to 1898 (AKDS…EDEI). 3 stretches are compositionally biased toward basic and acidic residues: residues 322 to 335 (SVAEDKDPEDEHRS), 344 to 368 (SVAEDKDPEDEHRSVAMAKKDRSVA), and 378 to 457 (AKKD…RSVA). A compositionally biased stretch (low complexity) spans 1833 to 1866 (AKDSNANDINAKDSNANDINANDSNAKDSNANDI). Residues 1882 to 1898 (NAKDSNADVPKKKEDEI) are compositionally biased toward basic and acidic residues.

This sequence belongs to the TIC214 family. In terms of assembly, part of the Tic complex.

The protein resides in the plastid. It localises to the chloroplast inner membrane. Involved in protein precursor import into chloroplasts. May be part of an intermediate translocation complex acting as a protein-conducting channel at the inner envelope. The polypeptide is Protein TIC 214 (Pinus koraiensis (Korean pine)).